The chain runs to 101 residues: Small ribosomal subunit protein uS14 (101 aa).

The disordered stretch occupies residues 49 to 70 (QSLPRDSSPSRQRNRCNQTGRP). Polar residues predominate over residues 52–68 (PRDSSPSRQRNRCNQTG).

Belongs to the universal ribosomal protein uS14 family. As to quaternary structure, part of the 30S ribosomal subunit. Contacts proteins S3 and S10.

Its function is as follows. Binds 16S rRNA, required for the assembly of 30S particles and may also be responsible for determining the conformation of the 16S rRNA at the A site. The polypeptide is Small ribosomal subunit protein uS14 (Yersinia pseudotuberculosis serotype O:1b (strain IP 31758)).